Here is a 158-residue protein sequence, read N- to C-terminus: AP-1 complex subunit sigma-1A (158 aa).

Serine 147 is modified (phosphoserine).

This sequence belongs to the adaptor complexes small subunit family. In terms of assembly, adaptor protein complex 1 (AP-1) is a heterotetramer composed of two large adaptins (gamma-type subunit AP1G1 and beta-type subunit AP1B1), a medium adaptin (mu-type subunit AP1M1 or AP1M2) and a small adaptin (sigma-type subunit AP1S1 or AP1S2 or AP1S3). Widely expressed.

Its subcellular location is the golgi apparatus. It localises to the cytoplasmic vesicle membrane. It is found in the membrane. The protein resides in the clathrin-coated pit. Its function is as follows. Subunit of clathrin-associated adaptor protein complex 1 that plays a role in protein sorting in the late-Golgi/trans-Golgi network (TGN) and/or endosomes. The AP complexes mediate both the recruitment of clathrin to membranes and the recognition of sorting signals within the cytosolic tails of transmembrane cargo molecules. The sequence is that of AP-1 complex subunit sigma-1A (AP1S1) from Homo sapiens (Human).